The primary structure comprises 151 residues: MSKDGINSKDFLIGTLIGGIIGATTALFLAPKSGKELRDDLGSQAVALRDKTDKMTADAKEKGTQYVSIAKDKTSNITQLVADQSGQIMNKVKDLRDRSKSDKTDSSTAMQDMREEAMQAADETKDQVLQTKEDVKDELKDAQKQAEQLNR.

The disordered stretch occupies residues 89–151; that stretch reads MNKVKDLRDR…AQKQAEQLNR (63 aa). Basic and acidic residues-rich tracts occupy residues 91-105 and 112-151; these read KVKD…DKTD and DMRE…QLNR.

The protein to C.plantagineum desiccation-related protein clone PCC3-06.

This is an uncharacterized protein from Bacillus subtilis (strain 168).